The following is a 579-amino-acid chain: Pre-mRNA-processing protein 45 (579 aa).

Disordered regions lie at residues 1 to 64 (MTSV…GWRP), 218 to 254 (QQDP…LTAE), 343 to 414 (QKAR…TERR), and 521 to 579 (AAEA…VDDD). The segment covering 234 to 245 (RGPPSPPPPIMH) has biased composition (pro residues). Over residues 343–359 (QKAREERAASNRRDSRA) the composition is skewed to basic and acidic residues. Over residues 366-379 (ASRSPSAYSRSATP) the composition is skewed to low complexity. 3 stretches are compositionally biased toward basic and acidic residues: residues 386–414 (ARER…TERR), 521–538 (AAEA…KDTT), and 563–579 (EVER…VDDD).

Belongs to the SNW family. In terms of assembly, associated with the spliceosome.

Its subcellular location is the nucleus. Involved in pre-mRNA splicing. This chain is Pre-mRNA-processing protein 45 (prp45), found in Aspergillus fumigatus (strain ATCC MYA-4609 / CBS 101355 / FGSC A1100 / Af293) (Neosartorya fumigata).